We begin with the raw amino-acid sequence, 124 residues long: ATP synthase epsilon chain (124 aa).

The span at 99-118 (LEQAKTEGDAHAERRADVRL) shows a compositional bias: basic and acidic residues. Residues 99–124 (LEQAKTEGDAHAERRADVRLRAAAGR) form a disordered region.

It belongs to the ATPase epsilon chain family. In terms of assembly, F-type ATPases have 2 components, CF(1) - the catalytic core - and CF(0) - the membrane proton channel. CF(1) has five subunits: alpha(3), beta(3), gamma(1), delta(1), epsilon(1). CF(0) has three main subunits: a, b and c.

The protein resides in the cell membrane. Functionally, produces ATP from ADP in the presence of a proton gradient across the membrane. The polypeptide is ATP synthase epsilon chain (atpC) (Streptomyces coelicolor (strain ATCC BAA-471 / A3(2) / M145)).